We begin with the raw amino-acid sequence, 262 residues long: uncharacterized protein (262 aa).

The protein belongs to the AB hydrolase superfamily. AB hydrolase 2 family.

This is an uncharacterized protein from Mycosarcoma maydis (Corn smut fungus).